The chain runs to 343 residues: Transcription factor MYB83 (343 aa).

Residues 1–16 (MMMRKPDITTIRDKGK) show a composition bias toward basic and acidic residues. Residues 1–33 (MMMRKPDITTIRDKGKPNHACGGNNNKPKLRKG) form a disordered region. 2 consecutive HTH myb-type domains span residues 27-79 (KPKL…INYL) and 80-134 (RPDL…KKRL). DNA-binding regions (H-T-H motif) lie at residues 55 to 79 (WSDI…INYL) and 107 to 130 (WSQI…NSTL). A disordered region spans residues 134-172 (LKNNSNNNTSSGSSPNNSNSNSLDPRDQHVDMGGNSTSL). Over residues 136 to 155 (NNSNNNTSSGSSPNNSNSNS) the composition is skewed to low complexity.

As to expression, expressed specifically in fiber and vessel cells that are undergoing secondary wall thickening in floral stems. Expressed in vessels but not in xylary fibers in the developing secondary xylem of roots.

Its subcellular location is the nucleus. Its function is as follows. Transcription factor that acts as a molecular switch in the NAC012/SND1-mediated transcriptional network regulating secondary wall biosynthesis. Is directly activated by NAC012/SND1 and its close homologs, including NAC043/NST1, NAC066/NST2, NAC101/VND6 and NAC030/VND7. Is required for functional expression of a number of secondary wall-associated transcription factors and secondary wall biosynthetic genes involved in cellulose, xylan and lignin synthesis. Functions redundantly with MYB46 in the transcriptional regulatory cascade leading to secondary wall formation in fibers and vessels. Transcription activator that binds to the DNA consensus sequence 5'-ACC[AT]A[AC][TC]-3', designated as the secondary wall MYB-responsive element (SMRE). Regulates directly numerous transcription factors and a number of genes involved in secondary wall biosynthesis that contain SMRE elements in their promoters. The chain is Transcription factor MYB83 from Arabidopsis thaliana (Mouse-ear cress).